Consider the following 149-residue polypeptide: Large ribosomal subunit protein bL9 (149 aa).

The protein belongs to the bacterial ribosomal protein bL9 family.

In terms of biological role, binds to the 23S rRNA. The protein is Large ribosomal subunit protein bL9 of Aliivibrio fischeri (strain ATCC 700601 / ES114) (Vibrio fischeri).